We begin with the raw amino-acid sequence, 404 residues long: MKFIDEARIEVMAGDGGNGSASFRREKFIPRGGPDGGDGGRGGSIYALADRNLNTLVDYRFTRMHRAQRGENGGNKDCYGKGGEDIVLRMPVGTVITDLETGELVADLDEDGKQAIVARGGKGGLGNLHFKSSVNRAPRKRTMGEEGERRALRLELKVLADVGLLGMPNAGKSTFIRAVSAAKPKVADYPFTTLAPNLGVVRTDQNRSFVIADIPGLIEGAAEGHGLGHQFLRHLQRTRVLLHLVDLAPFDPDADPVRDAKAIVEELRKYDESLYNKPRWLALNKLDLIPEDERAARVAAFLEAYGPVERHFEISALTGDGCRKLVFAIQDFLDAGRAQAEAEKAARTHAEALAAAEAEARVEAAYQARLQALLAEGETGTGDDGRDGNENDPADEQDTNRPNH.

One can recognise an Obg domain in the interval 1 to 159; the sequence is MKFIDEARIE…RALRLELKVL (159 aa). Positions 22 to 43 are disordered; that stretch reads SFRREKFIPRGGPDGGDGGRGG. Gly residues predominate over residues 33–43; that stretch reads GPDGGDGGRGG. Positions 160–334 constitute an OBG-type G domain; that stretch reads ADVGLLGMPN…LVFAIQDFLD (175 aa). GTP contacts are provided by residues 166-173, 191-195, 213-216, 284-287, and 315-317; these read GMPNAGKS, FTTLA, DIPG, NKLD, and SAL. Positions 173 and 193 each coordinate Mg(2+). The interval 373-404 is disordered; the sequence is LLAEGETGTGDDGRDGNENDPADEQDTNRPNH.

This sequence belongs to the TRAFAC class OBG-HflX-like GTPase superfamily. OBG GTPase family. In terms of assembly, monomer. Mg(2+) is required as a cofactor.

Its subcellular location is the cytoplasm. Its function is as follows. An essential GTPase which binds GTP, GDP and possibly (p)ppGpp with moderate affinity, with high nucleotide exchange rates and a fairly low GTP hydrolysis rate. Plays a role in control of the cell cycle, stress response, ribosome biogenesis and in those bacteria that undergo differentiation, in morphogenesis control. This chain is GTPase Obg, found in Aromatoleum aromaticum (strain DSM 19018 / LMG 30748 / EbN1) (Azoarcus sp. (strain EbN1)).